We begin with the raw amino-acid sequence, 435 residues long: MYSNFKEQAIEYVKQAVHEDNAGNYNKAFPLYMNALEYFKTHLKYEKNPKIREAITQKFTEYLRRAEEIRAVLDEGGSGPGSNGDAAVATRPKTKPKDGEGGGKDGEDPEQSKLRAGLNSAIVREKPNIKWSDVAGLESAKQALQEAVILPVKFPQFFTGKRRPWRAFLLYGPPGTGKSYLAKAVATEADSTFFSVSSSDLVSKWMGESEKLVSNLFEMARESAPSIIFVDEIDSLCGTRGEGNESEASRRIKTELLVQMQGVGHNDEKVLVLAATNTPYALDQAIRRRFDKRIYIPLPEAKARQHMFKVHLGDTPHNLTEPDFEYLGQKTEGFSGSDVSVCVKDVLFEPVRKTQDAMFFFKSPDGTWMPCGPRHPGAIQTTMQDLATKGLAEKIIPPPITRTDFEKVLARQRPTVSKSDLDVHERFTQEFGEEG.

The MIT domain occupies 7–72; sequence EQAIEYVKQA…LRRAEEIRAV (66 aa). The interval 73-113 is disordered; the sequence is LDEGGSGPGSNGDAAVATRPKTKPKDGEGGGKDGEDPEQSK. A compositionally biased stretch (basic and acidic residues) spans 95–113; it reads KPKDGEGGGKDGEDPEQSK. Position 172–179 (172–179) interacts with ATP; that stretch reads GPPGTGKS.

This sequence belongs to the AAA ATPase family. As to quaternary structure, monomer or homodimer (in nucleotide-free form). Decamer, dodecamer or tetradecamer of two stacked respective homooligomeric rings (when bound to ATP); the dodecameric form seems to be predominant. Interacts with members of the ESCRT-III subcomplex such as LIP5, VPS60-1, VPS2.1, VPS20.1, VPS20.2, VPS24-1, VPS32.1, VPS32.2, CHMP1A and VPS24. Binds to PROS/At4g24370. Mostly expressed in leaves, to a lower extent in seeds, and barely in roots and flowers (at protein level). Particularly expressed in trichomes.

The protein localises to the cytoplasm. It is found in the nucleus. The protein resides in the endosome. Its subcellular location is the multivesicular body membrane. It localises to the prevacuolar compartment membrane. It catalyses the reaction ATP + H2O = ADP + phosphate + H(+). Its activity is regulated as follows. Activated by LIP5 and PROS. Its function is as follows. Involved in the transport of biosynthetic membrane proteins from the prevacuolar/endosomal compartment to the vacuole. Required for multivesicular body (MVB) protein sorting. Catalyzes the ATP-dependent dissociation of class E VPS proteins from endosomal membranes, such as the disassembly of the ESCRT-III complex. May also regulate cell cycle. Required during seed development for the formation of mucilage in seed coat and testa. Involved in the maintenance of Na(+)/K(+) homeostasis under salt stress. Required for cell expansion. The protein is Protein SUPPRESSOR OF K(+) TRANSPORT GROWTH DEFECT 1 of Arabidopsis thaliana (Mouse-ear cress).